A 420-amino-acid polypeptide reads, in one-letter code: MKWLLFFGALIGAGICGRDKFFGDQVFRINVRNGDEIRKLTELVNSDHLKLSVWKSPSTFDRPVDILVPSVSLLPVKSFLKSQGLDYSVTIEDLQALLDNEDEEMQHNEGIERSGDFNYGAYHPLEAIYHEMDSIATDFPELVSRVKIGETFEKRPMYVLKFSTGGGKKRPAIWLNAGIHAREWISQATAIWTARKIVTDYKKDPAITSILKKVDIFLLPVANPDGYVYTQSQNRLWRKTRSRNPGSRCVGADPNRNWNASFAGEGTSDNPCSEVYHGSHPNSEVEVKSVVDFIQKHGNFKCFIDLHSYSQLLMYPYGYTVKKAPDAEELDDVARNAAQALASLSGTKYRVGPTCTTVYPASGSSVDWAYDNGIKYAFTFELRDTGYYGFLLPASQIIPTAEETWLGLKTIMEHVRDHLY.

Residues 1–16 (MKWLLFFGALIGAGIC) form the signal peptide. The propeptide at 17–113 (GRDKFFGDQV…EMQHNEGIER (97 aa)) is activation peptide. The a protein site is built by proline 69, valine 71, asparagine 118, tyrosine 122, histidine 123, glutamate 126, and phenylalanine 162. Residues 121-415 (AYHPLEAIYH…LGLKTIMEHV (295 aa)) enclose the Peptidase M14 domain. Histidine 180 and glutamate 183 together coordinate Zn(2+). A disulfide bridge links cysteine 249 with cysteine 272. The N-linked (GlcNAc...) asparagine glycan is linked to asparagine 259. A Zn(2+)-binding site is contributed by histidine 307. Catalysis depends on glutamate 381, which acts as the Proton donor/acceptor.

It belongs to the peptidase M14 family. Interacts with LXN. It depends on Zn(2+) as a cofactor.

The protein resides in the secreted. Its function is as follows. Metalloprotease that cleaves hydrophobic C-terminal residues with a preference for -Phe, -Leu, -Ile, -Met, -Tyr and -Val. May function in peptide hormone and/or neuropeptide catabolism. In Mus musculus (Mouse), this protein is Carboxypeptidase A4 (Cpa4).